Here is a 235-residue protein sequence, read N- to C-terminus: Phosphoribosylaminoimidazole-succinocarboxamide synthase (235 aa).

Belongs to the SAICAR synthetase family.

The catalysed reaction is 5-amino-1-(5-phospho-D-ribosyl)imidazole-4-carboxylate + L-aspartate + ATP = (2S)-2-[5-amino-1-(5-phospho-beta-D-ribosyl)imidazole-4-carboxamido]succinate + ADP + phosphate + 2 H(+). Its pathway is purine metabolism; IMP biosynthesis via de novo pathway; 5-amino-1-(5-phospho-D-ribosyl)imidazole-4-carboxamide from 5-amino-1-(5-phospho-D-ribosyl)imidazole-4-carboxylate: step 1/2. The polypeptide is Phosphoribosylaminoimidazole-succinocarboxamide synthase (Nautilia profundicola (strain ATCC BAA-1463 / DSM 18972 / AmH)).